The following is a 261-amino-acid chain: Flap endonuclease Xni (261 aa).

Aspartate 105 contacts Mg(2+). Positions 164–256 constitute a 5'-3' exonuclease domain; that stretch reads SQFLDLMALA…DFRVNSPTKA (93 aa). Residues leucine 172, alanine 173, proline 181, isoleucine 183, and isoleucine 186 each coordinate K(+). Residues 185–190 are interaction with DNA; the sequence is GIGPKS.

The protein belongs to the Xni family. Mg(2+) serves as cofactor. The cofactor is K(+).

Has flap endonuclease activity. During DNA replication, flap endonucleases cleave the 5'-overhanging flap structure that is generated by displacement synthesis when DNA polymerase encounters the 5'-end of a downstream Okazaki fragment. The sequence is that of Flap endonuclease Xni from Shewanella oneidensis (strain ATCC 700550 / JCM 31522 / CIP 106686 / LMG 19005 / NCIMB 14063 / MR-1).